The chain runs to 278 residues: Hydroxyethylthiazole kinase (278 aa).

M51 contacts substrate. ATP contacts are provided by R127 and S173. Position 201 (G201) interacts with substrate.

Belongs to the Thz kinase family. It depends on Mg(2+) as a cofactor.

It catalyses the reaction 5-(2-hydroxyethyl)-4-methylthiazole + ATP = 4-methyl-5-(2-phosphooxyethyl)-thiazole + ADP + H(+). It participates in cofactor biosynthesis; thiamine diphosphate biosynthesis; 4-methyl-5-(2-phosphoethyl)-thiazole from 5-(2-hydroxyethyl)-4-methylthiazole: step 1/1. In terms of biological role, catalyzes the phosphorylation of the hydroxyl group of 4-methyl-5-beta-hydroxyethylthiazole (THZ). The sequence is that of Hydroxyethylthiazole kinase from Leptothrix cholodnii (strain ATCC 51168 / LMG 8142 / SP-6) (Leptothrix discophora (strain SP-6)).